A 133-amino-acid chain; its full sequence is Large ribosomal subunit protein uL22c (133 aa).

Belongs to the universal ribosomal protein uL22 family. In terms of assembly, part of the 50S ribosomal subunit.

Its subcellular location is the plastid. It localises to the chloroplast. This protein binds specifically to 23S rRNA. Functionally, the globular domain of the protein is located near the polypeptide exit tunnel on the outside of the subunit, while an extended beta-hairpin is found that lines the wall of the exit tunnel in the center of the 70S ribosome. The sequence is that of Large ribosomal subunit protein uL22c (rpl22) from Manihot esculenta (Cassava).